The chain runs to 407 residues: Uronyl 2-sulfotransferase (407 aa).

The interval 1–20 (MKKKQQQHPGGGTDPWPHGA) is disordered. The Cytoplasmic segment spans residues 1–49 (MKKKQQQHPGGGTDPWPHGAPVGGAPPCLGSCKRRIPLLPFLRFSLRDY). Residues 50–70 (GFCMATLLVFCLGSLFYQLSG) traverse the membrane as a helical; Signal-anchor for type II membrane protein segment. Topologically, residues 71-407 (GPPRFLLDLR…EKWLEDIYKR (337 aa)) are lumenal. N-linked (GlcNAc...) asparagine glycosylation is found at Asn85, Asn141, and Asn156. His169 is a catalytic residue. Residues Asn174 and Asn320 are each glycosylated (N-linked (GlcNAc...) asparagine). Positions 386 to 400 (TEEPIDDEEQDDEKW) are enriched in acidic residues. The tract at residues 386–407 (TEEPIDDEEQDDEKWLEDIYKR) is disordered.

It belongs to the sulfotransferase 3 family.

It localises to the golgi apparatus membrane. Functionally, sulfotransferase that catalyzes the transfer of sulfate to the position 2 of uronyl residues in glycosaminoglycan chains. Has mainly activity toward iduronyl residues in dermatan sulfate, and weaker activity toward glucuronyl residues of chondroitin sulfate. Has no activity toward desulfated N-resulfated heparin. The chain is Uronyl 2-sulfotransferase from Mus musculus (Mouse).